The following is a 462-amino-acid chain: N-myc proto-oncogene protein (462 aa).

The interaction with AURKA stretch occupies residues 19 to 47; sequence LEFDSLQPCFYPDEDDFYFGGPDSTPPGE. The interaction with AURKA and FBXW7 stretch occupies residues 61-90; it reads LSPSRAFPEHSPEPSNWATEMLLPEADLWG. The 9aaTAD signature appears at 76–85; sequence NWATEMLLPE. Disordered regions lie at residues 134–177, 232–289, and 332–390; these read KLQH…ATLP, AAPA…SSNN, and APSP…LERQ. Low complexity-rich tracts occupy residues 143–176 and 232–244; these read GVSS…GATL and AAPA…PASS. Over residues 257–276 the composition is skewed to acidic residues; that stretch reads TLSDSDDEDDEEEDEEEEID. Phosphoserine; by CK2 is present on residues S259 and S261. In terms of domain architecture, bHLH spans 379–431; it reads ERRRNHNILERQRRNDLRSSFLTLRDHVPELVKNEKAAKVVILKKATEYVHAL. Positions 431 to 452 are leucine-zipper; it reads LQANEHQLLLEKEKLQARQQQL.

Efficient DNA binding requires dimerization with another bHLH protein. Binds DNA as a heterodimer with MAX. Interacts with KDM5A, KDM5B and HUWE1. Interacts with MYCNOS. Interacts with AURKA; interaction is phospho-independent and triggers AURKA activation; AURKA competes with FBXW7 for binding to unphosphorylated MYCN but not for binding to unphosphorylated MYCN. Interacts with FBXW7; FBXW7 competes with AURKA for binding to unphosphorylated MYCN but not for binding to phosphorylated MYCN. Phosphorylated by GSK3-beta which may promote its degradation. Phosphorylated by AURKA.

It localises to the nucleus. Positively regulates the transcription of MYCNOS in neuroblastoma cells. This Mus musculus (Mouse) protein is N-myc proto-oncogene protein (Mycn).